A 158-amino-acid polypeptide reads, in one-letter code: 3-hydroxyacyl-[acyl-carrier-protein] dehydratase FabZ (158 aa).

Residue His-57 is part of the active site.

It belongs to the thioester dehydratase family. FabZ subfamily.

The protein localises to the cytoplasm. The enzyme catalyses a (3R)-hydroxyacyl-[ACP] = a (2E)-enoyl-[ACP] + H2O. Its function is as follows. Involved in unsaturated fatty acids biosynthesis. Catalyzes the dehydration of short chain beta-hydroxyacyl-ACPs and long chain saturated and unsaturated beta-hydroxyacyl-ACPs. This Helicobacter acinonychis (strain Sheeba) protein is 3-hydroxyacyl-[acyl-carrier-protein] dehydratase FabZ.